The chain runs to 275 residues: Shikimate dehydrogenase (NADP(+)) (275 aa).

Shikimate is bound by residues 19 to 21 and Thr66; that span reads SIS. Lys70 functions as the Proton acceptor in the catalytic mechanism. The shikimate site is built by Asn91 and Asp106. Residues 129–133, 153–158, and Ile219 each bind NADP(+); these read GAGGA and NRTYGR. Position 221 (Tyr221) interacts with shikimate. Gly242 contributes to the NADP(+) binding site.

The protein belongs to the shikimate dehydrogenase family. In terms of assembly, homodimer.

It catalyses the reaction shikimate + NADP(+) = 3-dehydroshikimate + NADPH + H(+). It participates in metabolic intermediate biosynthesis; chorismate biosynthesis; chorismate from D-erythrose 4-phosphate and phosphoenolpyruvate: step 4/7. Its function is as follows. Involved in the biosynthesis of the chorismate, which leads to the biosynthesis of aromatic amino acids. Catalyzes the reversible NADPH linked reduction of 3-dehydroshikimate (DHSA) to yield shikimate (SA). The protein is Shikimate dehydrogenase (NADP(+)) of Dictyoglomus thermophilum (strain ATCC 35947 / DSM 3960 / H-6-12).